The chain runs to 333 residues: Glycerol-3-phosphate dehydrogenase [NAD(P)+] (333 aa).

Residues tryptophan 13, lysine 33, and lysine 108 each coordinate NADPH. Residues lysine 108 and glycine 138 each contribute to the sn-glycerol 3-phosphate site. Serine 142 lines the NADPH pocket. Sn-glycerol 3-phosphate contacts are provided by lysine 193, aspartate 246, serine 256, arginine 257, and asparagine 258. The active-site Proton acceptor is the lysine 193. Arginine 257 contributes to the NADPH binding site. Residues valine 281 and glutamate 283 each coordinate NADPH.

Belongs to the NAD-dependent glycerol-3-phosphate dehydrogenase family.

It is found in the cytoplasm. The enzyme catalyses sn-glycerol 3-phosphate + NAD(+) = dihydroxyacetone phosphate + NADH + H(+). The catalysed reaction is sn-glycerol 3-phosphate + NADP(+) = dihydroxyacetone phosphate + NADPH + H(+). The protein operates within membrane lipid metabolism; glycerophospholipid metabolism. In terms of biological role, catalyzes the reduction of the glycolytic intermediate dihydroxyacetone phosphate (DHAP) to sn-glycerol 3-phosphate (G3P), the key precursor for phospholipid synthesis. The polypeptide is Glycerol-3-phosphate dehydrogenase [NAD(P)+] (Bifidobacterium longum subsp. infantis (strain ATCC 15697 / DSM 20088 / JCM 1222 / NCTC 11817 / S12)).